A 30-amino-acid chain; its full sequence is Bowman-Birk type proteinase inhibitor 3 (30 aa).

2 disulfide bridges follow: Cys9-Cys24 and Cys14-Cys22.

Its function is as follows. Inhibits trypsin (IC(50)=4.90 nM) and, to a lesser extent, alpha-chymotrypsin (IC(50)=1.87 uM). The chain is Bowman-Birk type proteinase inhibitor 3 from Lathyrus sativus (White vetchling).